Here is a 448-residue protein sequence, read N- to C-terminus: Proline iminopeptidase aneH (448 aa).

One can recognise an AB hydrolase-1 domain in the interval 64–191 (PWMLYLQGGP…VEVFIGGGPC (128 aa)). The active-site Nucleophile is the S164. D397 is a catalytic residue. H425 acts as the Proton donor in catalysis.

Belongs to the peptidase S33 family. In terms of assembly, homooligomer.

The protein localises to the cytoplasm. It carries out the reaction Release of N-terminal proline from a peptide.. Its pathway is secondary metabolite biosynthesis. Proline iminopeptidase; part of the gene cluster that mediates the biosynthesis of aculenes, a unique type of norsesquiterpenes that contain a nordaucane skeleton linked to an L-proline moiety and are of mixed biosynthetic origin. The pathway begins with the synthesis of dauca-4,7-diene by the terpene cyclase aneC using farnesyl pyrophosphate (FPP) as substrate. The cytochrome P450 monooxygenase aneF then performs the initial oxidation at C-12 of dauca-4,7-diene to yield asperaculane D. Asperaculane D is substrate of the cytochrome P450 monooxygenase aneD for C-10 hydroxylation to yield asperaculane E. The cytochrome P450 monooxygenase aneG then converts asperaculane E into aculene D via C-2 oxidation. The monomodular nonribosomal peptide synthtase aneB adenylates L-proline and the thiohydrolase aneE transfers this activated L-proline derivative to aculenes D and C to produce respectively aculenes B and A. The dioxygenase aneA converts aculene D into aculene C, and aculene B into aculene A by introducing the 5,6-alkene moiety. Asperculanes A, B, C and F, as well as 14-prolyl asperculane C, might be shunt products of the pathway. The polypeptide is Proline iminopeptidase aneH (Aspergillus aculeatus (strain ATCC 16872 / CBS 172.66 / WB 5094)).